Reading from the N-terminus, the 236-residue chain is Peptidase E (236 aa).

Active-site charge relay system residues include Ser-122, Asp-137, and His-159.

The protein belongs to the peptidase S51 family.

It is found in the cytoplasm. The enzyme catalyses Dipeptidase E catalyzes the hydrolysis of dipeptides Asp-|-Xaa. It does not act on peptides with N-terminal Glu, Asn or Gln, nor does it cleave isoaspartyl peptides.. Its function is as follows. Hydrolyzes dipeptides containing N-terminal aspartate residues. May play a role in allowing the cell to use peptide aspartate to spare carbon otherwise required for the synthesis of the aspartate family of amino acids. The protein is Peptidase E of Shewanella oneidensis (strain ATCC 700550 / JCM 31522 / CIP 106686 / LMG 19005 / NCIMB 14063 / MR-1).